A 258-amino-acid chain; its full sequence is Aspartate/glutamate leucyltransferase (258 aa).

The protein belongs to the R-transferase family. Bpt subfamily.

It localises to the cytoplasm. The catalysed reaction is N-terminal L-glutamyl-[protein] + L-leucyl-tRNA(Leu) = N-terminal L-leucyl-L-glutamyl-[protein] + tRNA(Leu) + H(+). It catalyses the reaction N-terminal L-aspartyl-[protein] + L-leucyl-tRNA(Leu) = N-terminal L-leucyl-L-aspartyl-[protein] + tRNA(Leu) + H(+). Functions in the N-end rule pathway of protein degradation where it conjugates Leu from its aminoacyl-tRNA to the N-termini of proteins containing an N-terminal aspartate or glutamate. This is Aspartate/glutamate leucyltransferase from Bradyrhizobium diazoefficiens (strain JCM 10833 / BCRC 13528 / IAM 13628 / NBRC 14792 / USDA 110).